Reading from the N-terminus, the 260-residue chain is Triosephosphate isomerase (260 aa).

10–12 (NWK) serves as a coordination point for substrate. His100 functions as the Electrophile in the catalytic mechanism. Residue Glu172 is the Proton acceptor of the active site. Residues Gly178, Ser218, and 239–240 (GG) each bind substrate.

Belongs to the triosephosphate isomerase family. As to quaternary structure, homodimer.

It localises to the cytoplasm. The catalysed reaction is D-glyceraldehyde 3-phosphate = dihydroxyacetone phosphate. It functions in the pathway carbohydrate biosynthesis; gluconeogenesis. It participates in carbohydrate degradation; glycolysis; D-glyceraldehyde 3-phosphate from glycerone phosphate: step 1/1. Its function is as follows. Involved in the gluconeogenesis. Catalyzes stereospecifically the conversion of dihydroxyacetone phosphate (DHAP) to D-glyceraldehyde-3-phosphate (G3P). The protein is Triosephosphate isomerase of Corynebacterium diphtheriae (strain ATCC 700971 / NCTC 13129 / Biotype gravis).